Reading from the N-terminus, the 411-residue chain is Phospholipase A1-II 6 (411 aa).

Ser-226 (acyl-ester intermediate) is an active-site residue. Residues Ser-226, Asp-296, and His-334 each act as charge relay system in the active site.

This sequence belongs to the AB hydrolase superfamily. Lipase family.

The protein localises to the cytoplasm. Functionally, acylhydrolase that catalyzes the hydrolysis of phospholipids at the sn-1 position. The sequence is that of Phospholipase A1-II 6 from Oryza sativa subsp. japonica (Rice).